The following is a 389-amino-acid chain: Lipid-A-disaccharide synthase (389 aa).

The protein belongs to the LpxB family.

The catalysed reaction is a lipid X + a UDP-2-N,3-O-bis[(3R)-3-hydroxyacyl]-alpha-D-glucosamine = a lipid A disaccharide + UDP + H(+). It participates in bacterial outer membrane biogenesis; LPS lipid A biosynthesis. Its function is as follows. Condensation of UDP-2,3-diacylglucosamine and 2,3-diacylglucosamine-1-phosphate to form lipid A disaccharide, a precursor of lipid A, a phosphorylated glycolipid that anchors the lipopolysaccharide to the outer membrane of the cell. The polypeptide is Lipid-A-disaccharide synthase (Paraburkholderia phytofirmans (strain DSM 17436 / LMG 22146 / PsJN) (Burkholderia phytofirmans)).